A 475-amino-acid polypeptide reads, in one-letter code: MTVKTRFAPSPTGYLHVGGARTALYSWLYAKNQGGEFVLRIEDTDLERNSQEAVDAILEGMEWLGLEWNEGPYFQTQRFDRYNEMVDKLLEEDKAYKCYASKELLDEVRAEQEANKEMPRYDANHPKIKAANEAAKDGEPCVIRFRNPKEGSVVFDDQIRGRIEISNTQMDDLIIRRTDGSPTYNFCVVVDDWDMGITHVVRGEDHINNTPRQINIYEALGAPVPTFAHCAMILGDDGAKLSKRHGAVSVMQYRDMGYLPAALNNYLVRLGWSHGDQEIFTQEEMINLFSLNAVSKSASAFNTDKLQWLNNHYIKNSDPAYVAEHLQWHLDQQKLDVTNGPAITEVIKLVGERCNTLVELAEQIGYFYEDFAEFEAGAAKKHLRGVAKEPLELALAKAEALTEWTTANIKDGVIAAVCEELEIGMGKIGMPLRVAVTGGGQSPSVDAVMELIGKERCVARIKMALEFIAEREANA.

The 'HIGH' region signature appears at 9 to 19 (PSPTGYLHVGG). The 'KMSKS' region motif lies at 240-244 (KLSKR). Residue K243 participates in ATP binding.

This sequence belongs to the class-I aminoacyl-tRNA synthetase family. Glutamate--tRNA ligase type 1 subfamily. Monomer.

The protein resides in the cytoplasm. The catalysed reaction is tRNA(Glu) + L-glutamate + ATP = L-glutamyl-tRNA(Glu) + AMP + diphosphate. Catalyzes the attachment of glutamate to tRNA(Glu) in a two-step reaction: glutamate is first activated by ATP to form Glu-AMP and then transferred to the acceptor end of tRNA(Glu). The chain is Glutamate--tRNA ligase from Vibrio campbellii (strain ATCC BAA-1116).